The sequence spans 249 residues: MTSKRIIPCLDVKDGRVVKGVNFLNLVDKGDPVELAARYEEEGADEIVFLDITATIEGRKTMMNVVKDTASVISIPLTVGGGIRSLDDVSKILGNGADKVSINTAAVENKDLVSISSAEFGSQAIVVAIDVKRIGNDYYVFTRSGKYNTGINAISWAKEVEKLGAGEILLTSIDRDGTREGYDIEITELISKSVNIPIIASGGAGKIDDFLGILKVADAALAAGVFHDGVIRIMDLKKYLGKNGVEVRM.

Residues aspartate 11 and aspartate 130 contribute to the active site.

The protein belongs to the HisA/HisF family. Heterodimer of HisH and HisF.

The protein localises to the cytoplasm. It catalyses the reaction 5-[(5-phospho-1-deoxy-D-ribulos-1-ylimino)methylamino]-1-(5-phospho-beta-D-ribosyl)imidazole-4-carboxamide + L-glutamine = D-erythro-1-(imidazol-4-yl)glycerol 3-phosphate + 5-amino-1-(5-phospho-beta-D-ribosyl)imidazole-4-carboxamide + L-glutamate + H(+). Its pathway is amino-acid biosynthesis; L-histidine biosynthesis; L-histidine from 5-phospho-alpha-D-ribose 1-diphosphate: step 5/9. Functionally, IGPS catalyzes the conversion of PRFAR and glutamine to IGP, AICAR and glutamate. The HisF subunit catalyzes the cyclization activity that produces IGP and AICAR from PRFAR using the ammonia provided by the HisH subunit. This is Imidazole glycerol phosphate synthase subunit HisF from Sulfolobus acidocaldarius (strain ATCC 33909 / DSM 639 / JCM 8929 / NBRC 15157 / NCIMB 11770).